Reading from the N-terminus, the 248-residue chain is Acetylglutamate kinase (248 aa).

Substrate contacts are provided by residues 41–42 (GG), arginine 63, and asparagine 155.

This sequence belongs to the acetylglutamate kinase family. ArgB subfamily.

Its subcellular location is the cytoplasm. It carries out the reaction N-acetyl-L-glutamate + ATP = N-acetyl-L-glutamyl 5-phosphate + ADP. It participates in amino-acid biosynthesis; L-arginine biosynthesis; N(2)-acetyl-L-ornithine from L-glutamate: step 2/4. In terms of biological role, catalyzes the ATP-dependent phosphorylation of N-acetyl-L-glutamate. This chain is Acetylglutamate kinase, found in Lactiplantibacillus plantarum (strain ATCC BAA-793 / NCIMB 8826 / WCFS1) (Lactobacillus plantarum).